The chain runs to 100 residues: Ubiquitin-related modifier 1 homolog (100 aa).

Residue G100 is modified to 1-thioglycine. Residue G100 forms a Glycyl lysine isopeptide (Gly-Lys) (interchain with K-? in acceptor proteins) linkage.

The protein belongs to the URM1 family. Post-translationally, C-terminal thiocarboxylation occurs in 2 steps, it is first acyl-adenylated (-COAMP) via the hesA/moeB/thiF part of the MOCS3 homolog, then thiocarboxylated (-COSH) via the rhodanese domain of the MOCS3 homolog.

The protein resides in the cytoplasm. It participates in tRNA modification; 5-methoxycarbonylmethyl-2-thiouridine-tRNA biosynthesis. Functionally, acts as a sulfur carrier required for 2-thiolation of mcm(5)S(2)U at tRNA wobble positions of cytosolic tRNA(Lys), tRNA(Glu) and tRNA(Gln). Serves as sulfur donor in tRNA 2-thiolation reaction by being thiocarboxylated (-COSH) at its C-terminus by MOCS3. The sulfur is then transferred to tRNA to form 2-thiolation of mcm(5)S(2)U. Also acts as a ubiquitin-like protein (UBL) that is covalently conjugated via an isopeptide bond to lysine residues of target proteins. The thiocarboxylated form serves as substrate for conjugation and oxidative stress specifically induces the formation of UBL-protein conjugates. This Caenorhabditis elegans protein is Ubiquitin-related modifier 1 homolog.